The primary structure comprises 374 residues: MSAALFCGPPPAVSFGCKDGRGRKGMVRSKDIVRQTVKPPAHACRLIGWNKYPGSVVPTNSSLSPSPTALDDDIELDLSPFLIIYKDGRIERLKGTTVIPACPEVATKDVIIDPATGVSVRLYLPNVVDLPSKKLPVLVYFHGGGFVIENTGSPNYHNYLTLLAAKSGLLIVSVNYRLAPEHPIPASFDDCMAGFNWVVSHSAGPAPEPWLARHGDLTQILISGDSAGGTVTHYVLLRADAGVIEGAALVHPYFLGSKRLENQTEEDFEFHEKLWRLSTPNTEGLDDPLINPLAPGAPSLAGLKCKRAVVFVAELDFLVERGRMYYDALVKSGWGGEAELVHQEGVGHVFHLSDYSGDVSVDMMAKMVAFLRGE.

An amyloplast-targeting transit peptide spans 1-68; the sequence is MSAALFCGPP…TNSSLSPSPT (68 aa). Serine 226 (acyl-ester intermediate) is an active-site residue. Catalysis depends on charge relay system residues aspartate 316 and histidine 348.

It belongs to the AB hydrolase superfamily. As to quaternary structure, homodimer. In terms of tissue distribution, highly expressed in pistil and bulb scales. Lower expression in stem, and barely detected in root, leaf, petal and stamen.

The protein localises to the plastid. The protein resides in the amyloplast. The catalysed reaction is 6-tuliposide A = tulipalin A + D-glucose. In terms of biological role, lactone-forming carboxylesterases, specifically catalyzing intramolecular transesterification, but not hydrolysis. Involved in the biosynthesis of tulipalins, defensive chemicals that show antimicrobial activities against a broad range of strains of bacteria and fungi. Substrates are 6-tuliposide A &gt; 6-tuliposide B. This chain is Tuliposide A-converting enzyme b3, amyloplastic (TCEA-B3), found in Tulipa gesneriana (Garden tulip).